A 1086-amino-acid chain; its full sequence is DNA polymerase (1086 aa).

Residues 638–657 form a disordered region; that stretch reads STTRKPVDDVEEHSECNGFT.

Belongs to the DNA polymerase type-B family.

It catalyses the reaction DNA(n) + a 2'-deoxyribonucleoside 5'-triphosphate = DNA(n+1) + diphosphate. Replicates the viral genome. Host DNA polymerases cannot substitute for the viral enzyme in this process. This chain is DNA polymerase, found in Noctuidae (owlet moths).